A 320-amino-acid polypeptide reads, in one-letter code: o-succinylbenzoate synthase (320 aa).

Lysine 133 functions as the Proton donor in the catalytic mechanism. Residues aspartate 161, glutamate 190, and aspartate 213 each contribute to the Mg(2+) site. Lysine 235 functions as the Proton acceptor in the catalytic mechanism.

This sequence belongs to the mandelate racemase/muconate lactonizing enzyme family. MenC type 1 subfamily. The cofactor is a divalent metal cation.

The catalysed reaction is (1R,6R)-6-hydroxy-2-succinyl-cyclohexa-2,4-diene-1-carboxylate = 2-succinylbenzoate + H2O. The protein operates within quinol/quinone metabolism; 1,4-dihydroxy-2-naphthoate biosynthesis; 1,4-dihydroxy-2-naphthoate from chorismate: step 4/7. Its pathway is quinol/quinone metabolism; menaquinone biosynthesis. Its function is as follows. Converts 2-succinyl-6-hydroxy-2,4-cyclohexadiene-1-carboxylate (SHCHC) to 2-succinylbenzoate (OSB). The polypeptide is o-succinylbenzoate synthase (Salmonella dublin (strain CT_02021853)).